The chain runs to 329 residues: Malate dehydrogenase (329 aa).

Residue 11–17 (GAAGQIA) participates in NAD(+) binding. 2 residues coordinate substrate: R92 and R98. NAD(+)-binding positions include N105, Q112, and 129 to 131 (VGN). Positions 131 and 162 each coordinate substrate. H187 serves as the catalytic Proton acceptor.

It belongs to the LDH/MDH superfamily. MDH type 2 family.

The catalysed reaction is (S)-malate + NAD(+) = oxaloacetate + NADH + H(+). In terms of biological role, catalyzes the reversible oxidation of malate to oxaloacetate. The sequence is that of Malate dehydrogenase from Akkermansia muciniphila (strain ATCC BAA-835 / DSM 22959 / JCM 33894 / BCRC 81048 / CCUG 64013 / CIP 107961 / Muc).